The chain runs to 350 residues: Quinolinate phosphoribosyltransferase [decarboxylating] 1b (350 aa).

Substrate contacts are provided by residues arginine 141, 172–174, arginine 196, lysine 206, glutamate 239, aspartate 266, 298–300, and 319–321; these read TRK, SGN, and SGA.

The protein belongs to the NadC/ModD family.

It catalyses the reaction nicotinate beta-D-ribonucleotide + CO2 + diphosphate = quinolinate + 5-phospho-alpha-D-ribose 1-diphosphate + 2 H(+). It functions in the pathway alkaloid biosynthesis; nicotine biosynthesis. It participates in cofactor biosynthesis; NAD(+) biosynthesis; nicotinate D-ribonucleotide from quinolinate: step 1/1. Its function is as follows. Involved in the biosynthesis of pyridine alkaloid natural products, leading mainly to the production of anabasine, anatabine, nicotine and nornicotine, effective deterrents against herbivores with antiparasitic and pesticide properties (neurotoxins); nornicotine serves as the precursor in the synthesis of the carcinogen compound N'-nitrosonornicotine (NNN). Involved in the catabolism of quinolinic acid (QA). In Nicotiana tabacum (Common tobacco), this protein is Quinolinate phosphoribosyltransferase [decarboxylating] 1b.